The primary structure comprises 405 residues: Adenosylhomocysteinase (405 aa).

Residues D113 and E138 each contribute to the substrate site. 139-141 is an NAD(+) binding site; the sequence is TTT. K168 and D172 together coordinate substrate. Residues N173, 202–207, E225, N260, 281–283, and N327 contribute to the NAD(+) site; these read GYGWCG and AGH.

Belongs to the adenosylhomocysteinase family. The cofactor is NAD(+).

Its subcellular location is the cytoplasm. The enzyme catalyses S-adenosyl-L-homocysteine + H2O = L-homocysteine + adenosine. Its pathway is amino-acid biosynthesis; L-homocysteine biosynthesis; L-homocysteine from S-adenosyl-L-homocysteine: step 1/1. May play a key role in the regulation of the intracellular concentration of adenosylhomocysteine. This is Adenosylhomocysteinase from Archaeoglobus fulgidus (strain ATCC 49558 / DSM 4304 / JCM 9628 / NBRC 100126 / VC-16).